The chain runs to 324 residues: tRNA U34 carboxymethyltransferase (324 aa).

Residues Lys92, Trp106, Lys111, Gly131, 153–155, 182–183, Met197, Tyr201, and Arg316 each bind carboxy-S-adenosyl-L-methionine; these read DPT and IE.

It belongs to the class I-like SAM-binding methyltransferase superfamily. CmoB family. Homotetramer.

It carries out the reaction carboxy-S-adenosyl-L-methionine + 5-hydroxyuridine(34) in tRNA = 5-carboxymethoxyuridine(34) in tRNA + S-adenosyl-L-homocysteine + H(+). Functionally, catalyzes carboxymethyl transfer from carboxy-S-adenosyl-L-methionine (Cx-SAM) to 5-hydroxyuridine (ho5U) to form 5-carboxymethoxyuridine (cmo5U) at position 34 in tRNAs. The protein is tRNA U34 carboxymethyltransferase of Proteus mirabilis (strain HI4320).